The sequence spans 688 residues: Translation initiation factor IF-2 (688 aa).

2 stretches are compositionally biased toward basic and acidic residues: residues Gly-53–Glu-62 and Lys-86–Asn-95. Residues Gly-53–Glu-100 form a disordered region. The tr-type G domain occupies Lys-187–Glu-354. Positions Gly-196–Thr-203 are G1. Residue Gly-196–Thr-203 participates in GTP binding. A G2 region spans residues Gly-221–His-225. Positions Asp-242–Gly-245 are G3. GTP contacts are provided by residues Asp-242–His-246 and Asn-296–Asp-299. Positions Asn-296–Asp-299 are G4. The interval Ser-332–His-334 is G5.

It belongs to the TRAFAC class translation factor GTPase superfamily. Classic translation factor GTPase family. IF-2 subfamily.

The protein localises to the cytoplasm. One of the essential components for the initiation of protein synthesis. Protects formylmethionyl-tRNA from spontaneous hydrolysis and promotes its binding to the 30S ribosomal subunits. Also involved in the hydrolysis of GTP during the formation of the 70S ribosomal complex. The polypeptide is Translation initiation factor IF-2 (Clostridium botulinum (strain Loch Maree / Type A3)).